Reading from the N-terminus, the 340-residue chain is Glycerol-3-phosphate dehydrogenase [NAD(P)+] (340 aa).

Positions 12, 13, 34, and 107 each coordinate NADPH. Residues K107, G138, and S140 each coordinate sn-glycerol 3-phosphate. A142 lines the NADPH pocket. The sn-glycerol 3-phosphate site is built by K193, D246, S256, R257, and N258. K193 acts as the Proton acceptor in catalysis. Position 257 (R257) interacts with NADPH. 2 residues coordinate NADPH: I281 and E283.

The protein belongs to the NAD-dependent glycerol-3-phosphate dehydrogenase family.

The protein resides in the cytoplasm. The catalysed reaction is sn-glycerol 3-phosphate + NAD(+) = dihydroxyacetone phosphate + NADH + H(+). It carries out the reaction sn-glycerol 3-phosphate + NADP(+) = dihydroxyacetone phosphate + NADPH + H(+). It participates in membrane lipid metabolism; glycerophospholipid metabolism. Functionally, catalyzes the reduction of the glycolytic intermediate dihydroxyacetone phosphate (DHAP) to sn-glycerol 3-phosphate (G3P), the key precursor for phospholipid synthesis. The polypeptide is Glycerol-3-phosphate dehydrogenase [NAD(P)+] (Enterococcus faecalis (strain ATCC 700802 / V583)).